The primary structure comprises 535 residues: Pre-mRNA-splicing factor SLU7-A (535 aa).

Residues 21 to 44 form a disordered region; the sequence is EEARKAGLAPAEVDEDGKEINPHI. The CCHC-type zinc-finger motif lies at 96–109; it reads CQNCGAMTHTAKAC. Over residues 176-190 the composition is skewed to basic and acidic residues; that stretch reads LKKLEEKNNNEKGDD. 2 disordered regions span residues 176 to 204 and 489 to 508; these read LKKLEEKNNNEKGDDANSDGEEDEDDLRV and EDLSRREEKDERKRKYNVKY. Residues 191–203 show a composition bias toward acidic residues; it reads ANSDGEEDEDDLR. S193 carries the post-translational modification Phosphoserine. A Nuclear localization signal motif is present at residues 486–493; the sequence is LKKEDLSR. Residues 489–501 are compositionally biased toward basic and acidic residues; it reads EDLSRREEKDERK.

It belongs to the SLU7 family. Mainly expressed in tissues undergoing cell proliferation, particularly in lateral organs.

The protein resides in the nucleus. Functionally, participates in the second catalytic step of pre-mRNA splicing, when the free hydroxyl group of exon I attacks the 3'-splice site to generate spliced mRNA and the excised lariat intron. Together with SMP2, involved in the timing of cell cycle arrest during leaf development, in a STRUWWELPETER (SWP) dependent manner; promotes cell proliferation in developing organs. This chain is Pre-mRNA-splicing factor SLU7-A, found in Arabidopsis thaliana (Mouse-ear cress).